The following is a 628-amino-acid chain: Chaperone protein DnaK (628 aa).

Phosphothreonine; by autocatalysis is present on T197. The tract at residues 597-628 (EQMYKGEQGAQGGAADTSKKKSDDDVIDAEIE) is disordered.

This sequence belongs to the heat shock protein 70 family.

Its function is as follows. Acts as a chaperone. This Sulfurimonas denitrificans (strain ATCC 33889 / DSM 1251) (Thiomicrospira denitrificans (strain ATCC 33889 / DSM 1251)) protein is Chaperone protein DnaK.